A 193-amino-acid polypeptide reads, in one-letter code: Spermatogenesis-associated protein 3 (193 aa).

Over residues 1-16 (MKKVKKKKSDSRRRRN) the composition is skewed to basic residues. A disordered region spans residues 1 to 92 (MKKVKKKKSD…SPFLVPMEPK (92 aa)). Residues 17-35 (SISPQTSSDSSQQPSSETP) are compositionally biased toward low complexity. A compositionally biased stretch (pro residues) spans 36–48 (PSCPEPASPPSKP).

As to expression, strongly expressed in testis. Faintly expressed in epididymis, ovary, spleen, kidney, lung, heart, brain, epididymis, liver and skeletal muscle.

Its subcellular location is the cell projection. The protein localises to the cilium. It localises to the flagellum. The protein is Spermatogenesis-associated protein 3 (Spata3) of Mus musculus (Mouse).